We begin with the raw amino-acid sequence, 90 residues long: Small ribosomal subunit protein uS15c (90 aa).

It belongs to the universal ribosomal protein uS15 family. In terms of assembly, part of the 30S ribosomal subunit.

The protein localises to the plastid. The protein is Small ribosomal subunit protein uS15c (rps15) of Cuscuta reflexa (Southern Asian dodder).